The primary structure comprises 262 residues: ATP synthase subunit a (262 aa).

7 consecutive transmembrane segments (helical) span residues 30 to 50 (ITSL…LTIF), 64 to 84 (WNIV…DQIG), 91 to 111 (LIYF…NILG), 123 to 143 (ISVT…IGFS), 149 to 169 (FFSL…LVLI), 195 to 215 (LFGV…SILL), and 220 to 240 (IGLP…VALL).

This sequence belongs to the ATPase A chain family. F-type ATPases have 2 components, CF(1) - the catalytic core - and CF(0) - the membrane proton channel. CF(1) has five subunits: alpha(3), beta(3), gamma(1), delta(1), epsilon(1). CF(0) has three main subunits: a, b and c.

It localises to the mitochondrion inner membrane. Functionally, mitochondrial membrane ATP synthase (F(1)F(0) ATP synthase or Complex V) produces ATP from ADP in the presence of a proton gradient across the membrane which is generated by electron transport complexes of the respiratory chain. F-type ATPases consist of two structural domains, F(1) - containing the extramembraneous catalytic core and F(0) - containing the membrane proton channel, linked together by a central stalk and a peripheral stalk. During catalysis, ATP synthesis in the catalytic domain of F(1) is coupled via a rotary mechanism of the central stalk subunits to proton translocation. Key component of the proton channel; it may play a direct role in the translocation of protons across the membrane. The polypeptide is ATP synthase subunit a (ATP6) (Allomyces arbusculus (Aquatic fungus)).